The following is a 231-amino-acid chain: Enolase-phosphatase E1 (231 aa).

The protein belongs to the HAD-like hydrolase superfamily. MasA/MtnC family. As to quaternary structure, monomer. It depends on Mg(2+) as a cofactor.

It catalyses the reaction 5-methylsulfanyl-2,3-dioxopentyl phosphate + H2O = 1,2-dihydroxy-5-(methylsulfanyl)pent-1-en-3-one + phosphate. It functions in the pathway amino-acid biosynthesis; L-methionine biosynthesis via salvage pathway; L-methionine from S-methyl-5-thio-alpha-D-ribose 1-phosphate: step 3/6. It participates in amino-acid biosynthesis; L-methionine biosynthesis via salvage pathway; L-methionine from S-methyl-5-thio-alpha-D-ribose 1-phosphate: step 4/6. Functionally, bifunctional enzyme that catalyzes the enolization of 2,3-diketo-5-methylthiopentyl-1-phosphate (DK-MTP-1-P) into the intermediate 2-hydroxy-3-keto-5-methylthiopentenyl-1-phosphate (HK-MTPenyl-1-P), which is then dephosphorylated to form the acireductone 1,2-dihydroxy-3-keto-5-methylthiopentene (DHK-MTPene). This Granulibacter bethesdensis (strain ATCC BAA-1260 / CGDNIH1) protein is Enolase-phosphatase E1.